Here is a 516-residue protein sequence, read N- to C-terminus: Cytochrome P450 monooxygenase asR2 (516 aa).

A helical membrane pass occupies residues Leu-9 to Ile-29. Residues Asn-248 and Asn-273 are each glycosylated (N-linked (GlcNAc...) asparagine). A heme-binding site is contributed by Cys-461.

This sequence belongs to the cytochrome P450 family. Heme is required as a cofactor.

The protein localises to the membrane. The protein operates within secondary metabolite biosynthesis; terpenoid biosynthesis. Its function is as follows. Cytochrome P450 monooxygenase; part of the gene cluster that mediates the biosynthesis of xenovulene A, an unusual meroterpenoid that has potent inhibitory effects on the human gamma-aminobutyrate A (GABAA) benzodiazepine receptor. The first step of xenovulene A biosynthesis is the biosynthesis of 3-methylorcinaldehyde performed by the non-reducing polyketide synthase aspks1. The salicylate hydroxylase asL1 then catalyzes the oxidative dearomatization of 3-methylorcinaldehyde to yield a dearomatized hydroxycyclohexadione. The 2-oxoglutarate-dependent dioxygenase asL3 further catalyzes the oxidative ring expansion to provide the first tropolone metabolite. The cytochrome P450 monooxygenase asR2 allows the synthesis of tropolone hemiacetal. In parallel, a previously unrecognised class of terpene cyclase, asR6, produces alpha-humulene from farnesylpyrophosphate (FPP). The putative Diels-Alderase asR5 probably catalyzes the formation of the tropolone-humulene skeleton by linking humulene and the polyketide moiety. Oxidative-ring contractions catalyzed by asL4 and asL6 then processively remove carbon atoms from the polyketide to yield xenovulene A. The chain is Cytochrome P450 monooxygenase asR2 from Sarocladium schorii (Acremonium strictum (strain IMI 501407)).